Reading from the N-terminus, the 320-residue chain is Variant surface glycoprotein ILTAT 1.2 (320 aa).

Residues asparagine 146, asparagine 282, and asparagine 295 are each glycosylated (N-linked (GlcNAc...) asparagine). Positions 297-320 are disordered; the sequence is TKATENGVPVAQTQTGGSETTTEK. A compositionally biased stretch (low complexity) spans 308–320; that stretch reads QTQTGGSETTTEK.

Its subcellular location is the cell membrane. Functionally, VSG forms a coat on the surface of the parasite. The trypanosome evades the immune response of the host by expressing a series of antigenically distinct VSGs from an estimated 1000 VSG genes. This Trypanosoma brucei brucei protein is Variant surface glycoprotein ILTAT 1.2.